The sequence spans 212 residues: Uridine kinase (212 aa).

13-20 (GASASGKS) is an ATP binding site.

The protein belongs to the uridine kinase family.

It is found in the cytoplasm. It carries out the reaction uridine + ATP = UMP + ADP + H(+). The catalysed reaction is cytidine + ATP = CMP + ADP + H(+). Its pathway is pyrimidine metabolism; CTP biosynthesis via salvage pathway; CTP from cytidine: step 1/3. The protein operates within pyrimidine metabolism; UMP biosynthesis via salvage pathway; UMP from uridine: step 1/1. The protein is Uridine kinase of Shewanella denitrificans (strain OS217 / ATCC BAA-1090 / DSM 15013).